The primary structure comprises 391 residues: Methylthioribose-1-phosphate isomerase (391 aa).

Catalysis depends on aspartate 267, which acts as the Proton donor.

This sequence belongs to the eIF-2B alpha/beta/delta subunits family. MtnA subfamily.

Its subcellular location is the cytoplasm. The protein resides in the nucleus. The enzyme catalyses 5-(methylsulfanyl)-alpha-D-ribose 1-phosphate = 5-(methylsulfanyl)-D-ribulose 1-phosphate. It participates in amino-acid biosynthesis; L-methionine biosynthesis via salvage pathway; L-methionine from S-methyl-5-thio-alpha-D-ribose 1-phosphate: step 1/6. Catalyzes the interconversion of methylthioribose-1-phosphate (MTR-1-P) into methylthioribulose-1-phosphate (MTRu-1-P). The chain is Methylthioribose-1-phosphate isomerase from Ajellomyces capsulatus (strain NAm1 / WU24) (Darling's disease fungus).